We begin with the raw amino-acid sequence, 208 residues long: Uracil phosphoribosyltransferase (208 aa).

5-phospho-alpha-D-ribose 1-diphosphate contacts are provided by residues R78, R103, and 130-138 (DPMLATGGS). Uracil-binding positions include I193 and 198-200 (GDA). Residue D199 coordinates 5-phospho-alpha-D-ribose 1-diphosphate.

This sequence belongs to the UPRTase family. Mg(2+) serves as cofactor.

It catalyses the reaction UMP + diphosphate = 5-phospho-alpha-D-ribose 1-diphosphate + uracil. It functions in the pathway pyrimidine metabolism; UMP biosynthesis via salvage pathway; UMP from uracil: step 1/1. Its activity is regulated as follows. Allosterically activated by GTP. In terms of biological role, catalyzes the conversion of uracil and 5-phospho-alpha-D-ribose 1-diphosphate (PRPP) to UMP and diphosphate. This chain is Uracil phosphoribosyltransferase, found in Glaesserella parasuis serovar 5 (strain SH0165) (Haemophilus parasuis).